The following is a 335-amino-acid chain: Zinc finger protein 396 (335 aa).

The region spanning 52 to 134 is the SCAN box domain; the sequence is RQQFRQFGYQ…TMLEDVEREL (83 aa). 3 consecutive C2H2-type zinc fingers follow at residues 251 to 273, 279 to 301, and 307 to 329; these read QKCD…QRIH, YACD…RRTH, and YKCH…RKRH.

Belongs to the krueppel C2H2-type zinc-finger protein family. As to quaternary structure, isoforms 1 and 2 can both homo- and hetero-associate. In terms of tissue distribution, expressed strongly in liver, moderately in skeletal muscle and weakly in kidney, pancreas, spleen and prostate.

It localises to the nucleus. It is found in the cytoplasm. Its function is as follows. Isoform 1 and isoform 2 act as DNA-dependent transcriptional repressors. This is Zinc finger protein 396 (ZNF396) from Homo sapiens (Human).